Reading from the N-terminus, the 149-residue chain is MAEIGIFVGTMYGNSLLVAEEAEAILTAQGHKATVFEDPELSDWLPYQDKYVLVVTSTTGQGDLPDSIVPLFQGIKDSLGFQPNLRYGVIALGDSSYVNFCNGGKQFDALLQEQSAQRVGEMLLIDASENPEPETESNPWVEQWGTLLS.

One can recognise a Flavodoxin-like domain in the interval 4–145 (IGIFVGTMYG…ESNPWVEQWG (142 aa)). FMN-binding positions include 10 to 15 (TMYGNS) and 99 to 101 (NFC).

This sequence belongs to the flavodoxin family. MioC subfamily. In terms of assembly, monomer. FMN serves as cofactor.

In terms of biological role, probable electron transporter. This is Flavodoxin YqcA (yqcA) from Escherichia coli (strain K12).